The chain runs to 164 residues: MTKKDKKPKVATITTKSGETLKVFEDLAQFEDFLKHETEDDDDFDNVHCQLKYYPPFVLHEAHDDPEKIKDTANSHSKKYVRHLHQHVEKHLLKEIKEALQLPDLKFKDKSKDEDFEKIVWNYGDTGEFHDRKFRISISVTCKHDDAMVDLDYKTVPLTEESVI.

It belongs to the RGI1 family.

The protein resides in the cell membrane. Functionally, involved in the control of energetic metabolism and significantly contribute to cell fitness, especially under respiratory growth conditions. This chain is Respiratory growth induced protein 1 (RGI1), found in Vanderwaltozyma polyspora (strain ATCC 22028 / DSM 70294 / BCRC 21397 / CBS 2163 / NBRC 10782 / NRRL Y-8283 / UCD 57-17) (Kluyveromyces polysporus).